We begin with the raw amino-acid sequence, 440 residues long: uncharacterized protein (440 aa).

The next 10 membrane-spanning stretches (helical) occupy residues 26–46 (NGLI…SSTF), 59–79 (FVFW…NGVL), 96–116 (FFLG…LKLK), 138–158 (LTLS…SIYL), 211–231 (FLVF…YLFA), 241–261 (LRKP…VGII), 263–283 (WIII…FVIF), 284–304 (WVIK…SLTI), 394–414 (FLII…SVFI), and 418–438 (IVQI…FTFI).

To M.pneumoniae MPN_087.

The protein resides in the cell membrane. This is an uncharacterized protein from Mycoplasma pneumoniae (strain ATCC 29342 / M129 / Subtype 1) (Mycoplasmoides pneumoniae).